The chain runs to 120 residues: Large ribosomal subunit protein bL17 (120 aa).

It belongs to the bacterial ribosomal protein bL17 family. Part of the 50S ribosomal subunit. Contacts protein L32.

This is Large ribosomal subunit protein bL17 from Bacillus cereus (strain ATCC 14579 / DSM 31 / CCUG 7414 / JCM 2152 / NBRC 15305 / NCIMB 9373 / NCTC 2599 / NRRL B-3711).